The primary structure comprises 365 residues: tRNA(Met) cytidine acetate ligase (365 aa).

ATP is bound by residues 7-20, Gly-96, Asn-152, and Arg-175; that span reads IAEFNPFHNGHKYL.

It belongs to the TmcAL family.

The protein localises to the cytoplasm. The catalysed reaction is cytidine(34) in elongator tRNA(Met) + acetate + ATP = N(4)-acetylcytidine(34) in elongator tRNA(Met) + AMP + diphosphate. Catalyzes the formation of N(4)-acetylcytidine (ac(4)C) at the wobble position of elongator tRNA(Met), using acetate and ATP as substrates. First activates an acetate ion to form acetyladenylate (Ac-AMP) and then transfers the acetyl group to tRNA to form ac(4)C34. The sequence is that of tRNA(Met) cytidine acetate ligase from Streptococcus pneumoniae (strain Hungary19A-6).